The primary structure comprises 234 residues: NLP effector protein 1 (234 aa).

Residues 1–18 form the signal peptide; sequence MQLRAFISVFASLACVNA. Asn-66 carries N-linked (GlcNAc...) asparagine glycosylation. The Conserved undecapeptide motif I signature appears at 102–112; it reads AFMYSWYMPKD. The short motif at 119 to 125 is the Hepta-peptide GHRHDWE motif II element; sequence GHRHDWE.

Belongs to the Necrosis inducing protein (NPP1) family.

Its subcellular location is the secreted. Secreted effector that contributes to virulence during infection by P.capsici. Induces distinct chlorosis at 3 days after inoculation of host C.annuum leaves, and all the chlorotic areas gradually turn brown and become moderately necrotic at 7 days after inoculation. Leads only to chlorotic areas, without necrosis at 7 days after non-host N.benthamiana leaves infection. Induces cell death in hot pepper. In Phytophthora capsici, this protein is NLP effector protein 1.